The chain runs to 372 residues: uncharacterized protein (372 aa).

The signal sequence occupies residues 1–33 (MVRRALRLAAGTASLAAGTWLLRALHGTPAALG).

This sequence to K.pneumoniae RomA.

This is an uncharacterized protein from Mycobacterium bovis (strain ATCC BAA-935 / AF2122/97).